A 115-amino-acid polypeptide reads, in one-letter code: Large ribosomal subunit protein P2 (115 aa).

Met-1 is subject to N-acetylmethionine. Phosphoserine occurs at positions 17 and 19. Lys-21 is subject to N6-acetyllysine; alternate. The residue at position 21 (Lys-21) is an N6-succinyllysine; alternate. Positions 76–90 (APGSAAPAAGSAPAA) are enriched in low complexity. The tract at residues 76–115 (APGSAAPAAGSAPAAAEEKKDEKKEESEESDDDMGFGLFD) is disordered. Phosphoserine occurs at positions 79 and 86. Residues 91–101 (AEEKKDEKKEE) are compositionally biased toward basic and acidic residues. Phosphoserine occurs at positions 102 and 105.

It belongs to the eukaryotic ribosomal protein P1/P2 family. In terms of assembly, heterodimer with RPLP1 at the lateral ribosomal stalk of the large ribosomal subunit.

In terms of biological role, plays an important role in the elongation step of protein synthesis. In Mus musculus (Mouse), this protein is Large ribosomal subunit protein P2 (Rplp2).